The primary structure comprises 558 residues: SPATS2-like protein (558 aa).

Position 2 is an N-acetylalanine (Ala-2). Residues 63–79 (GKKKNNKRKRSKSKQHQ) show a composition bias toward basic residues. Disordered regions lie at residues 63–134 (GKKK…EKKI) and 157–201 (KLSL…KSNT). The segment covering 80 to 92 (GNKDAKDKVERPE) has biased composition (basic and acidic residues). Position 120 is a phosphoserine (Ser-120). The stretch at 271 to 344 (LMAEMDKVKE…ARFSCDIEQL (74 aa)) forms a coiled coil. The tract at residues 380 to 525 (TSGKQSNFSR…DTSEARPFRG (146 aa)) is disordered. 3 stretches are compositionally biased toward polar residues: residues 381-390 (SGKQSNFSRK), 410-432 (SLPS…GSSN), and 440-456 (QYHN…QGSG). At Ser-455 the chain carries Phosphoserine. Basic residues predominate over residues 469-485 (HEHRRQPHNGFRPKNKG). Over residues 513 to 522 (HAADTSEARP) the composition is skewed to basic and acidic residues.

The protein belongs to the SPATS2 family.

The protein resides in the cytoplasm. It localises to the nucleus. It is found in the nucleolus. This is SPATS2-like protein (SPATS2L) from Homo sapiens (Human).